Consider the following 510-residue polypeptide: MTTSIIERIDAWAEKTPDFPCYEYAGTRLSYKELKRQSDAFGSFLLKNLITDKEKPIIVYGHMSPLMLVAFLGSIKSGRAYVPVDVSMPVERIEQIKKAADPSMFICTEELPNNLTITGCPVLTQDQLMDALEKHFGEVPDKEACVNNDDNYYIIYTSGSTGNPKGVQISQNNLVSFSNWILQDFSLSQGLRFLNQAPFSFDLSVMDLYPSLLSGGTLVPLDKTITANMKDLYREIPAQNLDVWVSTPSFADLCLLDENFNQENNPRLTRFLFCGEVLAKKTASELLDRFPDAVIYNTYGPTEATVAVTQVKVTREIIDAYPSLPLGVIKPDMRLHIVDQETGEVLPEGEKGEIVLIGASVSKGYLNEPEKTDQVFFDYKGYQAYRTGDSGIIKDGYLFFQGRLDFQIKLHGYRIELEDIENNLKKVSYIQNCAIIPKMKDEKVDMLVAQVIPTTHDFEKEYQLSAAIKKELKEFMPAYMIPRKWIYKTDFPLTMNGKIDRKSLNSEVNK.

157-158 (TS) contributes to the ATP binding site. Asp-202 is a binding site for D-alanine. Position 297–302 (297–302 (NTYGPT)) interacts with ATP. Val-306 lines the D-alanine pocket. Residues Asp-389 and Lys-498 each contribute to the ATP site. Lys-498 contacts D-alanine.

Belongs to the ATP-dependent AMP-binding enzyme family. DltA subfamily.

The protein localises to the cytoplasm. It catalyses the reaction holo-[D-alanyl-carrier protein] + D-alanine + ATP = D-alanyl-[D-alanyl-carrier protein] + AMP + diphosphate. The protein operates within cell wall biogenesis; lipoteichoic acid biosynthesis. Catalyzes the first step in the D-alanylation of lipoteichoic acid (LTA), the activation of D-alanine and its transfer onto the D-alanyl carrier protein (Dcp) DltC. In an ATP-dependent two-step reaction, forms a high energy D-alanyl-AMP intermediate, followed by transfer of the D-alanyl residue as a thiol ester to the phosphopantheinyl prosthetic group of the Dcp. D-alanylation of LTA plays an important role in modulating the properties of the cell wall in Gram-positive bacteria, influencing the net charge of the cell wall. The protein is D-alanine--D-alanyl carrier protein ligase of Listeria monocytogenes serovar 1/2a (strain ATCC BAA-679 / EGD-e).